The chain runs to 739 residues: Phosphoribosylformylglycinamidine synthase subunit PurL (739 aa).

The active site involves His-54. ATP contacts are provided by Tyr-57 and Lys-96. Glu-98 contacts Mg(2+). Residues 99–102 and Arg-121 each bind substrate; that span reads SHNH. His-100 serves as the catalytic Proton acceptor. Asp-122 contributes to the Mg(2+) binding site. Gln-245 is a substrate binding site. Asp-273 is a binding site for Mg(2+). 317–319 provides a ligand contact to substrate; the sequence is ESQ. Asp-500 and Gly-537 together coordinate ATP. Residue Asn-538 coordinates Mg(2+). Ser-540 is a substrate binding site.

It belongs to the FGAMS family. In terms of assembly, monomer. Part of the FGAM synthase complex composed of 1 PurL, 1 PurQ and 2 PurS subunits.

Its subcellular location is the cytoplasm. It catalyses the reaction N(2)-formyl-N(1)-(5-phospho-beta-D-ribosyl)glycinamide + L-glutamine + ATP + H2O = 2-formamido-N(1)-(5-O-phospho-beta-D-ribosyl)acetamidine + L-glutamate + ADP + phosphate + H(+). The protein operates within purine metabolism; IMP biosynthesis via de novo pathway; 5-amino-1-(5-phospho-D-ribosyl)imidazole from N(2)-formyl-N(1)-(5-phospho-D-ribosyl)glycinamide: step 1/2. Its function is as follows. Part of the phosphoribosylformylglycinamidine synthase complex involved in the purines biosynthetic pathway. Catalyzes the ATP-dependent conversion of formylglycinamide ribonucleotide (FGAR) and glutamine to yield formylglycinamidine ribonucleotide (FGAM) and glutamate. The FGAM synthase complex is composed of three subunits. PurQ produces an ammonia molecule by converting glutamine to glutamate. PurL transfers the ammonia molecule to FGAR to form FGAM in an ATP-dependent manner. PurS interacts with PurQ and PurL and is thought to assist in the transfer of the ammonia molecule from PurQ to PurL. This chain is Phosphoribosylformylglycinamidine synthase subunit PurL, found in Bacillus cereus (strain Q1).